Reading from the N-terminus, the 435-residue chain is Serine--tRNA ligase (435 aa).

An L-serine-binding site is contributed by 233-235 (TAE). 264-266 (RAE) contributes to the ATP binding site. Residue Glu-287 coordinates L-serine. 351-354 (EISS) provides a ligand contact to ATP. Position 386 (Ser-386) interacts with L-serine.

The protein belongs to the class-II aminoacyl-tRNA synthetase family. Type-1 seryl-tRNA synthetase subfamily. Homodimer. The tRNA molecule binds across the dimer.

Its subcellular location is the cytoplasm. The catalysed reaction is tRNA(Ser) + L-serine + ATP = L-seryl-tRNA(Ser) + AMP + diphosphate + H(+). The enzyme catalyses tRNA(Sec) + L-serine + ATP = L-seryl-tRNA(Sec) + AMP + diphosphate + H(+). It functions in the pathway aminoacyl-tRNA biosynthesis; selenocysteinyl-tRNA(Sec) biosynthesis; L-seryl-tRNA(Sec) from L-serine and tRNA(Sec): step 1/1. In terms of biological role, catalyzes the attachment of serine to tRNA(Ser). Is also able to aminoacylate tRNA(Sec) with serine, to form the misacylated tRNA L-seryl-tRNA(Sec), which will be further converted into selenocysteinyl-tRNA(Sec). The sequence is that of Serine--tRNA ligase from Anaeromyxobacter dehalogenans (strain 2CP-C).